Consider the following 160-residue polypeptide: Lipoprotein signal peptidase (160 aa).

3 consecutive transmembrane segments (helical) span residues 7–27 (VIYY…KWLV), 61–81 (GQFW…IIYI), and 91–111 (AGIG…DRVF). Residues D117 and D135 contribute to the active site. The helical transmembrane segment at 133–153 (IADSALTVGVILLFIHMFFFA) threads the bilayer.

Belongs to the peptidase A8 family.

The protein resides in the cell membrane. It catalyses the reaction Release of signal peptides from bacterial membrane prolipoproteins. Hydrolyzes -Xaa-Yaa-Zaa-|-(S,diacylglyceryl)Cys-, in which Xaa is hydrophobic (preferably Leu), and Yaa (Ala or Ser) and Zaa (Gly or Ala) have small, neutral side chains.. It functions in the pathway protein modification; lipoprotein biosynthesis (signal peptide cleavage). In terms of biological role, this protein specifically catalyzes the removal of signal peptides from prolipoproteins. The polypeptide is Lipoprotein signal peptidase (Geobacillus thermodenitrificans (strain NG80-2)).